We begin with the raw amino-acid sequence, 318 residues long: NADH-ubiquinone oxidoreductase chain 1 (318 aa).

The next 8 membrane-spanning stretches (helical) occupy residues 2-22, 68-88, 102-122, 146-166, 171-191, 217-237, 253-273, and 294-314; these read FLMNLLLLIIPILVAMAFLTL, ISLFIIAPSLALTLAFTMWIP, ILFILATSSLAVYTILWSGWA, LAIILLSVLLLNGSFTLSSLI, FTWLLLPTWPLAMMWFISTLA, AGPFALFFMAEYTNIIMMNAL, EMFTFSFTLKTLMLTATFLWI, and LPLTLALCMWHISLPVIMACI.

It belongs to the complex I subunit 1 family.

The protein localises to the mitochondrion inner membrane. The enzyme catalyses a ubiquinone + NADH + 5 H(+)(in) = a ubiquinol + NAD(+) + 4 H(+)(out). Core subunit of the mitochondrial membrane respiratory chain NADH dehydrogenase (Complex I) that is believed to belong to the minimal assembly required for catalysis. Complex I functions in the transfer of electrons from NADH to the respiratory chain. The immediate electron acceptor for the enzyme is believed to be ubiquinone. In Tamias sibiricus (Siberian chipmunk), this protein is NADH-ubiquinone oxidoreductase chain 1 (MT-ND1).